The chain runs to 68 residues: Large ribosomal subunit protein uL30 (68 aa).

It belongs to the universal ribosomal protein uL30 family. In terms of assembly, part of the 50S ribosomal subunit.

The polypeptide is Large ribosomal subunit protein uL30 (Kocuria rhizophila (strain ATCC 9341 / DSM 348 / NBRC 103217 / DC2201)).